The following is a 585-amino-acid chain: Glutamate decarboxylase 2 (585 aa).

Residues Met-1 to Thr-25 are disordered. Residues Ser-3, Ser-6, Ser-10, and Ser-13 each carry the phosphoserine modification. 2 S-palmitoyl cysteine lipidation sites follow: Cys-30 and Cys-45. Gln-181–Ser-183 lines the substrate pocket. Lys-396 carries the N6-(pyridoxal phosphate)lysine modification. Residue Arg-558 participates in substrate binding.

The protein belongs to the group II decarboxylase family. As to quaternary structure, homodimer. The cofactor is pyridoxal 5'-phosphate. Post-translationally, phosphorylated; which does not affect kinetic parameters or subcellular location. In terms of processing, palmitoylated; which is required for presynaptic clustering.

It localises to the cytoplasm. It is found in the cytosol. Its subcellular location is the cytoplasmic vesicle. The protein localises to the presynaptic cell membrane. The protein resides in the golgi apparatus membrane. It catalyses the reaction L-glutamate + H(+) = 4-aminobutanoate + CO2. Its function is as follows. Catalyzes the production of GABA. The chain is Glutamate decarboxylase 2 (GAD2) from Canis lupus familiaris (Dog).